We begin with the raw amino-acid sequence, 1423 residues long: DNA-directed RNA polymerase, mitochondrial (1423 aa).

A mitochondrion-targeting transit peptide spans methionine 1–leucine 73. Residues asparagine 266–glutamine 303 are disordered. The segment covering glutamine 278–glutamine 297 has biased composition (low complexity). Catalysis depends on residues aspartate 901 and lysine 970. Basic and acidic residues predominate over residues glutamate 1055–histidine 1064. A disordered region spans residues glutamate 1055–lysine 1087. The active site involves aspartate 1180. Residues valine 1316–histidine 1342 form a disordered region. The segment covering methionine 1322–glutamate 1336 has biased composition (acidic residues).

It belongs to the phage and mitochondrial RNA polymerase family.

It localises to the mitochondrion. It catalyses the reaction RNA(n) + a ribonucleoside 5'-triphosphate = RNA(n+1) + diphosphate. In terms of biological role, DNA-dependent RNA polymerase catalyzes the transcription of DNA into RNA using the four ribonucleoside triphosphates as substrates. The polypeptide is DNA-directed RNA polymerase, mitochondrial (cyt-5) (Neurospora crassa (strain ATCC 24698 / 74-OR23-1A / CBS 708.71 / DSM 1257 / FGSC 987)).